Consider the following 248-residue polypeptide: Adenosylcobinamide-GDP ribazoletransferase (248 aa).

Helical transmembrane passes span 36 to 56 (FFLP…YLAL), 59 to 79 (FLPP…ITGG), 114 to 134 (GTIA…SLVL), 137 to 157 (YSIA…FLCL), 170 to 190 (IFIG…VLAL), and 199 to 219 (ATII…LLCL).

The protein belongs to the CobS family. The cofactor is Mg(2+).

It is found in the cell membrane. It catalyses the reaction alpha-ribazole + adenosylcob(III)inamide-GDP = adenosylcob(III)alamin + GMP + H(+). The enzyme catalyses alpha-ribazole 5'-phosphate + adenosylcob(III)inamide-GDP = adenosylcob(III)alamin 5'-phosphate + GMP + H(+). It participates in cofactor biosynthesis; adenosylcobalamin biosynthesis; adenosylcobalamin from cob(II)yrinate a,c-diamide: step 7/7. Its function is as follows. Joins adenosylcobinamide-GDP and alpha-ribazole to generate adenosylcobalamin (Ado-cobalamin). Also synthesizes adenosylcobalamin 5'-phosphate from adenosylcobinamide-GDP and alpha-ribazole 5'-phosphate. This is Adenosylcobinamide-GDP ribazoletransferase from Clostridium botulinum (strain Okra / Type B1).